The chain runs to 396 residues: Tryptophan synthase beta chain (396 aa).

Residue Lys96 is modified to N6-(pyridoxal phosphate)lysine.

The protein belongs to the TrpB family. As to quaternary structure, tetramer of two alpha and two beta chains. Requires pyridoxal 5'-phosphate as cofactor.

The catalysed reaction is (1S,2R)-1-C-(indol-3-yl)glycerol 3-phosphate + L-serine = D-glyceraldehyde 3-phosphate + L-tryptophan + H2O. The protein operates within amino-acid biosynthesis; L-tryptophan biosynthesis; L-tryptophan from chorismate: step 5/5. Its function is as follows. The beta subunit is responsible for the synthesis of L-tryptophan from indole and L-serine. In Azobacteroides pseudotrichonymphae genomovar. CFP2, this protein is Tryptophan synthase beta chain.